Here is an 87-residue protein sequence, read N- to C-terminus: Large ribosomal subunit protein bL31B (87 aa).

It belongs to the bacterial ribosomal protein bL31 family. Type B subfamily. As to quaternary structure, part of the 50S ribosomal subunit.

This is Large ribosomal subunit protein bL31B from Latilactobacillus sakei subsp. sakei (strain 23K) (Lactobacillus sakei subsp. sakei).